A 345-amino-acid polypeptide reads, in one-letter code: Phosphate acyltransferase (345 aa).

The protein belongs to the PlsX family. Homodimer. Probably interacts with PlsY.

The protein resides in the cytoplasm. The enzyme catalyses a fatty acyl-[ACP] + phosphate = an acyl phosphate + holo-[ACP]. It participates in lipid metabolism; phospholipid metabolism. Its function is as follows. Catalyzes the reversible formation of acyl-phosphate (acyl-PO(4)) from acyl-[acyl-carrier-protein] (acyl-ACP). This enzyme utilizes acyl-ACP as fatty acyl donor, but not acyl-CoA. This chain is Phosphate acyltransferase, found in Proteus mirabilis (strain HI4320).